The following is a 192-amino-acid chain: Ras-like GTP-binding protein rhoA (192 aa).

12–19 contacts GTP; the sequence is GDGACGKT. The Effector region motif lies at 34–42; the sequence is YVPTVFENY. GTP-binding positions include 59–63 and 117–120; these read DTAGQ and NKRD. Cysteine 189 carries the cysteine methyl ester modification. Cysteine 189 is lipidated: S-geranylgeranyl cysteine. Positions 190–192 are cleaved as a propeptide — removed in mature form; the sequence is MIL.

Belongs to the small GTPase superfamily. Rho family. In terms of assembly, may interact with unc-89 (via DN and PH domains). Interacts with bli-3 and memo-1. As to expression, in larvae and adults, enriched at the tip of the head where the anterior sensory organ is located and in the pharyngeal nerve ring (at protein level). In embryos, enriched at the boundaries of dorsal cells undergoing intercalation, ventral enclosure and elongation.

It is found in the cell membrane. Its subcellular location is the cytoplasm. The protein resides in the cytoskeleton. The protein localises to the cell cortex. With respect to regulation, GTP hydrolysis is stimulated by unc-89. Its function is as follows. Required for ventral migration of epidermal cells during ventral enclosure in the embryo and for cell elongation. Also required for ventral migration of P cells during larval development. Involved in asymmetric spindle positioning during anaphase and establishment of cell polarity during embryo development. In adults, involved in regulation of multiple processes including locomotion, pharyngeal pumping, fecundity, ovulation, defecation and body morphology. In body wall muscles, regulates organization of myosin thick filaments downstream of unc-89. Association with the oxidase bli-3 promotes ROS production and this interaction may be modulated by memo-1, in order to control the oxidative stress response and longevity. This is Ras-like GTP-binding protein rhoA from Caenorhabditis elegans.